Consider the following 200-residue polypeptide: Potassium-transporting ATPase KdpC subunit (200 aa).

The chain crosses the membrane as a helical span at residues 6–26 (PAVVLLILLTLITGIAYPLLT).

Belongs to the KdpC family. The system is composed of three essential subunits: KdpA, KdpB and KdpC.

The protein localises to the cell inner membrane. Part of the high-affinity ATP-driven potassium transport (or Kdp) system, which catalyzes the hydrolysis of ATP coupled with the electrogenic transport of potassium into the cytoplasm. This subunit acts as a catalytic chaperone that increases the ATP-binding affinity of the ATP-hydrolyzing subunit KdpB by the formation of a transient KdpB/KdpC/ATP ternary complex. The polypeptide is Potassium-transporting ATPase KdpC subunit (Yersinia enterocolitica serotype O:8 / biotype 1B (strain NCTC 13174 / 8081)).